A 301-amino-acid polypeptide reads, in one-letter code: Inosose dehydratase (301 aa).

The protein belongs to the IolE/MocC family. It depends on glutathione as a cofactor. Co(2+) is required as a cofactor. Mn(2+) serves as cofactor.

It carries out the reaction scyllo-inosose = 3D-3,5/4-trihydroxycyclohexane-1,2-dione + H2O. It functions in the pathway polyol metabolism; myo-inositol degradation into acetyl-CoA; acetyl-CoA from myo-inositol: step 2/7. Its function is as follows. Catalyzes the dehydration of inosose (2-keto-myo-inositol, 2KMI or 2,4,6/3,5-pentahydroxycyclohexanone) to 3D-(3,5/4)-trihydroxycyclohexane-1,2-dione (D-2,3-diketo-4-deoxy-epi-inositol). The sequence is that of Inosose dehydratase from Lacticaseibacillus casei (strain BL23) (Lactobacillus casei).